Here is a 258-residue protein sequence, read N- to C-terminus: Imidazole glycerol phosphate synthase subunit HisF (258 aa).

Active-site residues include Asp-11 and Asp-130.

The protein belongs to the HisA/HisF family. In terms of assembly, heterodimer of HisH and HisF.

It localises to the cytoplasm. The catalysed reaction is 5-[(5-phospho-1-deoxy-D-ribulos-1-ylimino)methylamino]-1-(5-phospho-beta-D-ribosyl)imidazole-4-carboxamide + L-glutamine = D-erythro-1-(imidazol-4-yl)glycerol 3-phosphate + 5-amino-1-(5-phospho-beta-D-ribosyl)imidazole-4-carboxamide + L-glutamate + H(+). It functions in the pathway amino-acid biosynthesis; L-histidine biosynthesis; L-histidine from 5-phospho-alpha-D-ribose 1-diphosphate: step 5/9. Functionally, IGPS catalyzes the conversion of PRFAR and glutamine to IGP, AICAR and glutamate. The HisF subunit catalyzes the cyclization activity that produces IGP and AICAR from PRFAR using the ammonia provided by the HisH subunit. The protein is Imidazole glycerol phosphate synthase subunit HisF of Yersinia pseudotuberculosis serotype O:1b (strain IP 31758).